A 507-amino-acid polypeptide reads, in one-letter code: Glucose-6-phosphate isomerase (507 aa).

The active-site Proton donor is Glu338. Active-site residues include His369 and Lys479.

The protein belongs to the GPI family.

The protein localises to the cytoplasm. It catalyses the reaction alpha-D-glucose 6-phosphate = beta-D-fructose 6-phosphate. It functions in the pathway carbohydrate biosynthesis; gluconeogenesis. It participates in carbohydrate degradation; glycolysis; D-glyceraldehyde 3-phosphate and glycerone phosphate from D-glucose: step 2/4. Its function is as follows. Provides a gateway for fructose into the Entner-Doudouroff pathway. In terms of biological role, catalyzes the reversible isomerization of glucose-6-phosphate to fructose-6-phosphate. In Zymomonas mobilis subsp. mobilis (strain ATCC 31821 / ZM4 / CP4), this protein is Glucose-6-phosphate isomerase.